An 81-amino-acid chain; its full sequence is U12-hexatoxin-Mg1a (81 aa).

The signal sequence occupies residues 1-24 (MKAPATIVILIMSLISVLWATADT). The propeptide occupies 25–50 (EDGNLLFPIEDFIRKFDEYPVQPKER). Intrachain disulfides connect cysteine 52/cysteine 66, cysteine 59/cysteine 71, and cysteine 65/cysteine 75. A Proline amide modification is found at proline 78.

As to expression, expressed by the venom gland.

It is found in the secreted. In terms of biological role, blocks voltage-gated sodium channels (Nav). Intracranial injection into mice causes lacrimation, slow breathing and death. Intrathorax injection into crickets causes death. This is U12-hexatoxin-Mg1a from Macrothele gigas (Japanese funnel web spider).